The sequence spans 320 residues: (+)-corvol ether B synthase/(+)-corvol ether A synthase ((2E,6E)-farnesyl diphosphate cyclizing) (320 aa).

2 residues coordinate Mg(2+): Asp78 and Asp83. The DDXXXD motif motif lies at 78–83 (DDLFVD). Residue Arg171 coordinates substrate. 3 residues coordinate Mg(2+): Asn217, Ser221, and Glu225.

The protein belongs to the terpene synthase family. It depends on Mg(2+) as a cofactor.

It carries out the reaction (2E,6E)-farnesyl diphosphate + H2O = (+)-corvol ether B + diphosphate. The enzyme catalyses (2E,6E)-farnesyl diphosphate + H2O = (+)-corvol ether A + diphosphate. It participates in secondary metabolite biosynthesis; terpenoid biosynthesis. Its function is as follows. Catalyzes the conversion of (2E,6E)-farnesyl diphosphate (FPP) into (+)-corvol ether A and (+)-corvol ether B via a 1,10-cyclization, which requires isomerization of FPP to nerolidyl diphosphate (NPP) and then abstraction of the pyrophosphate from intermediate NPP leading to a (E,Z)-germacradienyl (helminthogermacradienyl) cation. The preferred substrate is (2E,6E)-farnesyl diphosphate (FPP), however geranyl diphosphate (GPP) is also able to produce small amounts of several acyclic and cyclic monoterpenes, with linalool as the main product. This Kitasatospora setae (strain ATCC 33774 / DSM 43861 / JCM 3304 / KCC A-0304 / NBRC 14216 / KM-6054) (Streptomyces setae) protein is (+)-corvol ether B synthase/(+)-corvol ether A synthase ((2E,6E)-farnesyl diphosphate cyclizing).